The following is a 417-amino-acid chain: MAATAATTTSSHLLLSSSRHVASSSQPSILSPRSLFSNNGKRAPTGVRNHQYASGVRCMAVAADAAETKTAARKKSGYELQTLTGWLLRQEMKGEIDAELTIVMSSISLACKQIASLVQRAGISNLTGVQGAVNIQGEDQKKLDVISNEVFSNCLRSSGRTGIIASEEEDVPVAVEESYSGNYVVVFDPLDGSSNIDAAVSTGSIFGIYSPNDECIVDDSDDISALGSEEQRCIVNVCQPGNNLLAAGYCMYSSSVIFVLTLGKGVFSFTLDPMYGEFVLTQENIEIPKAGRIYSFNEGNYQMWDDKLKKYIDDLKDPGPTGKPYSARYIGSLVGDFHRTLLYGGIYGYPRDAKSKNGKLRLLYECAPMSFIVEQAGGKGSDGHSRVLDIQPTEIHQRVPLYIGSTEEVEKLEKYLA.

The N-terminal 59 residues, 1-59, are a transit peptide targeting the chloroplast; sequence MAATAATTTSSHLLLSSSRHVASSSQPSILSPRSLFSNNGKRAPTGVRNHQYASGVRCM. Residues 24–35 are compositionally biased toward low complexity; it reads SSQPSILSPRSL. The tract at residues 24-48 is disordered; sequence SSQPSILSPRSLFSNNGKRAPTGVR. Position 60 is an N-acetylalanine (Ala-60). Glu-138, Glu-167, Asp-188, Leu-190, and Asp-191 together coordinate Mg(2+). 191 to 194 lines the substrate pocket; it reads DGSS. An intrachain disulfide couples Cys-233 to Cys-238. Substrate-binding residues include Asn-297, Tyr-329, Tyr-347, Tyr-349, and Lys-359. Glu-365 lines the Mg(2+) pocket.

This sequence belongs to the FBPase class 1 family. As to quaternary structure, homotetramer. Mg(2+) is required as a cofactor.

It localises to the plastid. The protein localises to the chloroplast stroma. It catalyses the reaction beta-D-fructose 1,6-bisphosphate + H2O = beta-D-fructose 6-phosphate + phosphate. It participates in carbohydrate biosynthesis; Calvin cycle. Its function is as follows. Catalyzes the irreversible reaction from fructose-1,6-bisphosphate to fructose-6-phosphate and inorganic phosphate, to regenerate the primary CO(2) acceptor molecule, ribulose-1,5-bisphosphate. Involved in the regulation of photosynthetic electron flow and sucrose synthesis. Its activity is critical for normal plant development and important for the regulation of a wide range of metabolic processes. This is Fructose-1,6-bisphosphatase 1, chloroplastic from Arabidopsis thaliana (Mouse-ear cress).